The chain runs to 513 residues: Aspartic proteinase A2 (513 aa).

An N-terminal signal peptide occupies residues 1–24 (MGVYSRAVAFSVFVSFLLFFTAYS). The propeptide at 25–71 (KRNDGTFRVGLKKLKLDPNNRLATRFGSKQEEALRSSLRSYNNNLGG) is activation peptide. The region spanning 89–510 (YYGEIAIGTP…DFGNEQVGFA (422 aa)) is the Peptidase A1 domain. Asp107 is an active-site residue. 2 cysteine pairs are disulfide-bonded: Cys120/Cys126 and Cys285/Cys289. The active site involves Asp294. The 106-residue stretch at 319 to 424 (VVSQQCKTVV…NEICERMPSP (106 aa)) folds into the Saposin B-type domain. Cystine bridges form between Cys324–Cys418, Cys349–Cys390, Cys355–Cys387, and Cys432–Cys469. The N-linked (GlcNAc...) asparagine glycan is linked to Asn404.

The protein belongs to the peptidase A1 family. In terms of tissue distribution, expressed in seed pods and dry seeds.

The protein localises to the vacuole. Its function is as follows. Involved in the breakdown of propeptides of storage proteins in protein-storage vacuoles. In Arabidopsis thaliana (Mouse-ear cress), this protein is Aspartic proteinase A2 (APA2).